The primary structure comprises 99 residues: Putative transmembrane protein ORF13 (99 aa).

Helical transmembrane passes span 8-28 (IATF…MAGI), 42-62 (LGLF…YIIV), and 73-93 (GPIT…AIIA).

The protein localises to the host membrane. This is Putative transmembrane protein ORF13 from His1 virus (isolate Australia/Victoria) (His1V).